A 385-amino-acid chain; its full sequence is Alkanesulfonate monooxygenase (385 aa).

Belongs to the SsuD family.

It catalyses the reaction an alkanesulfonate + FMNH2 + O2 = an aldehyde + FMN + sulfite + H2O + 2 H(+). Catalyzes the desulfonation of aliphatic sulfonates. The polypeptide is Alkanesulfonate monooxygenase (Burkholderia pseudomallei (strain 1710b)).